The chain runs to 110 residues: Nucleoid-associated protein YE3092 (110 aa).

The protein belongs to the YbaB/EbfC family. Homodimer.

Its subcellular location is the cytoplasm. The protein localises to the nucleoid. In terms of biological role, binds to DNA and alters its conformation. May be involved in regulation of gene expression, nucleoid organization and DNA protection. This is Nucleoid-associated protein YE3092 from Yersinia enterocolitica serotype O:8 / biotype 1B (strain NCTC 13174 / 8081).